A 236-amino-acid chain; its full sequence is 2,3,4,5-tetrahydropyridine-2,6-dicarboxylate N-acetyltransferase (236 aa).

It belongs to the transferase hexapeptide repeat family. DapH subfamily.

It catalyses the reaction (S)-2,3,4,5-tetrahydrodipicolinate + acetyl-CoA + H2O = L-2-acetamido-6-oxoheptanedioate + CoA. Its pathway is amino-acid biosynthesis; L-lysine biosynthesis via DAP pathway; LL-2,6-diaminopimelate from (S)-tetrahydrodipicolinate (acetylase route): step 1/3. Functionally, catalyzes the transfer of an acetyl group from acetyl-CoA to tetrahydrodipicolinate. In Bacillus licheniformis (strain ATCC 14580 / DSM 13 / JCM 2505 / CCUG 7422 / NBRC 12200 / NCIMB 9375 / NCTC 10341 / NRRL NRS-1264 / Gibson 46), this protein is 2,3,4,5-tetrahydropyridine-2,6-dicarboxylate N-acetyltransferase.